Here is a 476-residue protein sequence, read N- to C-terminus: Bifunctional protein HldE (476 aa).

A ribokinase region spans residues Met-1–Thr-318. Residue Asn-195–Glu-198 coordinates ATP. The active site involves Asp-264. The segment at Met-344 to Asp-476 is cytidylyltransferase.

In the N-terminal section; belongs to the carbohydrate kinase PfkB family. The protein in the C-terminal section; belongs to the cytidylyltransferase family. As to quaternary structure, homodimer.

It catalyses the reaction D-glycero-beta-D-manno-heptose 7-phosphate + ATP = D-glycero-beta-D-manno-heptose 1,7-bisphosphate + ADP + H(+). The enzyme catalyses D-glycero-beta-D-manno-heptose 1-phosphate + ATP + H(+) = ADP-D-glycero-beta-D-manno-heptose + diphosphate. It participates in nucleotide-sugar biosynthesis; ADP-L-glycero-beta-D-manno-heptose biosynthesis; ADP-L-glycero-beta-D-manno-heptose from D-glycero-beta-D-manno-heptose 7-phosphate: step 1/4. It functions in the pathway nucleotide-sugar biosynthesis; ADP-L-glycero-beta-D-manno-heptose biosynthesis; ADP-L-glycero-beta-D-manno-heptose from D-glycero-beta-D-manno-heptose 7-phosphate: step 3/4. Functionally, catalyzes the phosphorylation of D-glycero-D-manno-heptose 7-phosphate at the C-1 position to selectively form D-glycero-beta-D-manno-heptose-1,7-bisphosphate. Its function is as follows. Catalyzes the ADP transfer from ATP to D-glycero-beta-D-manno-heptose 1-phosphate, yielding ADP-D-glycero-beta-D-manno-heptose. The chain is Bifunctional protein HldE from Haemophilus influenzae (strain 86-028NP).